The following is a 526-amino-acid chain: Peptide chain release factor 3 (526 aa).

In terms of domain architecture, tr-type G spans 8–277 (GKRRTFAIIS…GLTEWAPAPQ (270 aa)). Residues 17 to 24 (SHPDAGKT), 85 to 89 (DTPGH), and 139 to 142 (NKMD) contribute to the GTP site.

It belongs to the TRAFAC class translation factor GTPase superfamily. Classic translation factor GTPase family. PrfC subfamily.

It localises to the cytoplasm. Its function is as follows. Increases the formation of ribosomal termination complexes and stimulates activities of RF-1 and RF-2. It binds guanine nucleotides and has strong preference for UGA stop codons. It may interact directly with the ribosome. The stimulation of RF-1 and RF-2 is significantly reduced by GTP and GDP, but not by GMP. The chain is Peptide chain release factor 3 from Aliivibrio salmonicida (strain LFI1238) (Vibrio salmonicida (strain LFI1238)).